The primary structure comprises 242 residues: 1-(5-phosphoribosyl)-5-[(5-phosphoribosylamino)methylideneamino] imidazole-4-carboxamide isomerase (242 aa).

Residue Asp-8 is the Proton acceptor of the active site. Asp-129 serves as the catalytic Proton donor.

Belongs to the HisA/HisF family.

It is found in the cytoplasm. The catalysed reaction is 1-(5-phospho-beta-D-ribosyl)-5-[(5-phospho-beta-D-ribosylamino)methylideneamino]imidazole-4-carboxamide = 5-[(5-phospho-1-deoxy-D-ribulos-1-ylimino)methylamino]-1-(5-phospho-beta-D-ribosyl)imidazole-4-carboxamide. Its pathway is amino-acid biosynthesis; L-histidine biosynthesis; L-histidine from 5-phospho-alpha-D-ribose 1-diphosphate: step 4/9. The sequence is that of 1-(5-phosphoribosyl)-5-[(5-phosphoribosylamino)methylideneamino] imidazole-4-carboxamide isomerase from Maridesulfovibrio salexigens (strain ATCC 14822 / DSM 2638 / NCIMB 8403 / VKM B-1763) (Desulfovibrio salexigens).